Here is a 187-residue protein sequence, read N- to C-terminus: Elongation factor P (187 aa).

It belongs to the elongation factor P family.

Its subcellular location is the cytoplasm. It participates in protein biosynthesis; polypeptide chain elongation. Its function is as follows. Involved in peptide bond synthesis. Stimulates efficient translation and peptide-bond synthesis on native or reconstituted 70S ribosomes in vitro. Probably functions indirectly by altering the affinity of the ribosome for aminoacyl-tRNA, thus increasing their reactivity as acceptors for peptidyl transferase. The chain is Elongation factor P from Rhodococcus opacus (strain B4).